Reading from the N-terminus, the 100-residue chain is Small ribosomal subunit protein bS20 (100 aa).

Residues M1 to V20 are compositionally biased toward basic residues. The interval M1–R21 is disordered.

This sequence belongs to the bacterial ribosomal protein bS20 family.

Functionally, binds directly to 16S ribosomal RNA. This chain is Small ribosomal subunit protein bS20, found in Albidiferax ferrireducens (strain ATCC BAA-621 / DSM 15236 / T118) (Rhodoferax ferrireducens).